Here is a 34-residue protein sequence, read N- to C-terminus: Photosystem II reaction center protein M (34 aa).

The chain crosses the membrane as a helical span at residues 7–27; the sequence is GFIATILFVLVPTVFLLILYI.

This sequence belongs to the PsbM family. PSII is composed of 1 copy each of membrane proteins PsbA, PsbB, PsbC, PsbD, PsbE, PsbF, PsbH, PsbI, PsbJ, PsbK, PsbL, PsbM, PsbT, PsbX, PsbY, PsbZ, Psb30/Ycf12, peripheral proteins PsbO, CyanoQ (PsbQ), PsbU, PsbV and a large number of cofactors. It forms dimeric complexes.

The protein resides in the cellular thylakoid membrane. Functionally, one of the components of the core complex of photosystem II (PSII). PSII is a light-driven water:plastoquinone oxidoreductase that uses light energy to abstract electrons from H(2)O, generating O(2) and a proton gradient subsequently used for ATP formation. It consists of a core antenna complex that captures photons, and an electron transfer chain that converts photonic excitation into a charge separation. This subunit is found at the monomer-monomer interface. The chain is Photosystem II reaction center protein M from Picosynechococcus sp. (strain ATCC 27264 / PCC 7002 / PR-6) (Agmenellum quadruplicatum).